A 380-amino-acid chain; its full sequence is Cytochrome b (380 aa).

Transmembrane regions (helical) follow at residues 34–54 (FGSLLGICLVTQILTGLLLAT), 78–99 (WLIRNLHANGASLFFICIYLHI), 114–134 (WNTGVILLLSLMATAFVGYVL), and 179–199 (FFALHFLLPFLIAGLTLTHLT). 2 residues coordinate heme b: His-84 and His-98. His-183 and His-197 together coordinate heme b. A ubiquinone is bound at residue His-202. The next 4 membrane-spanning stretches (helical) occupy residues 227 to 247 (PKDLLGFILMFLPLTALALFS), 289 to 309 (LGGVLALAASVLILFLAPFLH), 321 to 341 (LSQLLFWILVTNLLILTWVGS), and 348 to 368 (FIIIGQLASLAYFIILLILFP).

It belongs to the cytochrome b family. The cytochrome bc1 complex contains 11 subunits: 3 respiratory subunits (MT-CYB, CYC1 and UQCRFS1), 2 core proteins (UQCRC1 and UQCRC2) and 6 low-molecular weight proteins (UQCRH/QCR6, UQCRB/QCR7, UQCRQ/QCR8, UQCR10/QCR9, UQCR11/QCR10 and a cleavage product of UQCRFS1). This cytochrome bc1 complex then forms a dimer. Requires heme b as cofactor.

Its subcellular location is the mitochondrion inner membrane. Component of the ubiquinol-cytochrome c reductase complex (complex III or cytochrome b-c1 complex) that is part of the mitochondrial respiratory chain. The b-c1 complex mediates electron transfer from ubiquinol to cytochrome c. Contributes to the generation of a proton gradient across the mitochondrial membrane that is then used for ATP synthesis. The polypeptide is Cytochrome b (MT-CYB) (Todus todus (Jamaican tody)).